A 360-amino-acid chain; its full sequence is DNA replication and repair protein RecF (360 aa).

ATP is bound at residue 33–40; the sequence is GENGSGKT.

The protein belongs to the RecF family.

It is found in the cytoplasm. In terms of biological role, the RecF protein is involved in DNA metabolism; it is required for DNA replication and normal SOS inducibility. RecF binds preferentially to single-stranded, linear DNA. It also seems to bind ATP. This chain is DNA replication and repair protein RecF, found in Rickettsia conorii (strain ATCC VR-613 / Malish 7).